The chain runs to 779 residues: Cell division control protein 4 (779 aa).

The interval 39-80 is disordered; that stretch reads AGTHRNSSTAKTVETEDGEEDIDEYQRKRAAGSGESTPERSD. Residues 82–85 carry the Nuclear localization signal motif; that stretch reads KRVK. Phosphoserine is present on Ser-104. The 48-residue stretch at 272 to 319 folds into the F-box domain; the sequence is RDLITSLPFEISLKIFNYLQFEDIINSLGVSQNWNKIIRKSTSLWKKL. WD repeat units lie at residues 380 to 408, 420 to 449, 461 to 493, 528 to 556, 568 to 598, 630 to 658, and 669 to 698; these read HMTS…RVYD, GHDG…RVWD, GHNS…HVWK, GHMA…IVWD, GHTD…RIWD, GHTA…RGWD, and HHTN…NIYN.

Interacts with DCD53 and SKP1. Component of the SCF(CDC4) complex containing CDC53, SKP1, RBX1 and CDC4. CDC34. Interacts with CDC6 and CIC1. Interacts with SIC1; the interaction involves a SIC1 double phosphorylated motif (degron). Homodimerizes; the dimerization increases SIC1 ubiquitination in vitro.

Its subcellular location is the nucleus. The protein operates within protein modification; protein ubiquitination. In terms of biological role, substrate recognition component of a SCF (SKP1-CUL1-F-box protein) E3 ubiquitin-protein ligase complex which mediates the ubiquitination and subsequent proteasomal degradation of target proteins. Recognizes and binds to phosphorylated target proteins. Directs ubiquitination of the phosphorylated CDK inhibitor SIC1. Involved in the degradation of CDC6 together with CDC34/UBC3 and CDC53, and in restricting the degradation of FAR1 to the nucleus. Is essential for initiation of DNA replication and separation of the spindle pole bodies to form the poles of the mitotic spindle. It also plays a role in bud development, fusion of zygotic nuclei after conjugation and various aspects of sporulation. Required for HTA1-HTB1 locus transcription activation. Required for G1/S and G2/M transition. The sequence is that of Cell division control protein 4 (CDC4) from Saccharomyces cerevisiae (strain ATCC 204508 / S288c) (Baker's yeast).